Consider the following 363-residue polypeptide: F-box protein At3g44326 (363 aa).

Positions 1–23 (MLSSSSSSTVEQPSRGGSPGINA) are disordered. One can recognise an F-box domain in the interval 27–66 (DVLRSNILTRLDGSSLAALSCTCSNLNSFCSDESLWRQQC).

This Arabidopsis thaliana (Mouse-ear cress) protein is F-box protein At3g44326.